Consider the following 319-residue polypeptide: tRNA (guanine-N(7)-)-methyltransferase (319 aa).

A disordered region spans residues 1–44; it reads MSESPETPEPSPAQSPEAAPEQPQAARPVTPGSQASFGTYGGRP. A compositionally biased stretch (low complexity) spans 14-26; it reads QSPEAAPEQPQAA. 4 residues coordinate S-adenosyl-L-methionine: Glu-103, Glu-128, Asn-155, and Asp-178. Residue Asp-178 is part of the active site. The substrate site is built by Lys-182 and Asp-214. A disordered region spans residues 262-288; sequence APVKEGRAPVSTEHTGPNEGVDETGGW. Residue 298-301 coordinates substrate; it reads TSFE.

This sequence belongs to the class I-like SAM-binding methyltransferase superfamily. TrmB family.

It carries out the reaction guanosine(46) in tRNA + S-adenosyl-L-methionine = N(7)-methylguanosine(46) in tRNA + S-adenosyl-L-homocysteine. It functions in the pathway tRNA modification; N(7)-methylguanine-tRNA biosynthesis. Its function is as follows. Catalyzes the formation of N(7)-methylguanine at position 46 (m7G46) in tRNA. This Arthrobacter sp. (strain FB24) protein is tRNA (guanine-N(7)-)-methyltransferase.